The sequence spans 354 residues: Biotin synthase (354 aa).

The Radical SAM core domain maps to 41 to 265 (NEVQISRLLS…IMPHSRVRLS (225 aa)). [4Fe-4S] cluster-binding residues include cysteine 56, cysteine 60, and cysteine 63. Residues cysteine 100, cysteine 131, cysteine 191, and arginine 263 each coordinate [2Fe-2S] cluster.

This sequence belongs to the radical SAM superfamily. Biotin synthase family. In terms of assembly, homodimer. Requires [4Fe-4S] cluster as cofactor. The cofactor is [2Fe-2S] cluster.

It carries out the reaction (4R,5S)-dethiobiotin + (sulfur carrier)-SH + 2 reduced [2Fe-2S]-[ferredoxin] + 2 S-adenosyl-L-methionine = (sulfur carrier)-H + biotin + 2 5'-deoxyadenosine + 2 L-methionine + 2 oxidized [2Fe-2S]-[ferredoxin]. It participates in cofactor biosynthesis; biotin biosynthesis; biotin from 7,8-diaminononanoate: step 2/2. Its function is as follows. Catalyzes the conversion of dethiobiotin (DTB) to biotin by the insertion of a sulfur atom into dethiobiotin via a radical-based mechanism. This Shewanella sediminis (strain HAW-EB3) protein is Biotin synthase.